The chain runs to 697 residues: Methionine--tRNA ligase (697 aa).

Residues 12 to 22 (PYANGHFHIGH) carry the 'HIGH' region motif. 4 residues coordinate Zn(2+): Cys143, Cys146, Cys156, and Cys159. Residues 342–346 (KMSKS) carry the 'KMSKS' region motif. Lys345 serves as a coordination point for ATP. The disordered stretch occupies residues 557–577 (FEPPAEPSPQTSPAAAGAGAV). Residues 591–697 (DFTKIDLRLA…PGAVPGLRVR (107 aa)) form the tRNA-binding domain.

Belongs to the class-I aminoacyl-tRNA synthetase family. MetG type 1 subfamily. As to quaternary structure, homodimer. Zn(2+) is required as a cofactor.

It is found in the cytoplasm. The catalysed reaction is tRNA(Met) + L-methionine + ATP = L-methionyl-tRNA(Met) + AMP + diphosphate. In terms of biological role, is required not only for elongation of protein synthesis but also for the initiation of all mRNA translation through initiator tRNA(fMet) aminoacylation. The protein is Methionine--tRNA ligase of Methylibium petroleiphilum (strain ATCC BAA-1232 / LMG 22953 / PM1).